The following is a 193-amino-acid chain: MFQNHKSEILLATPLIKDDAIFTKSVIYLCQNDRHGAMGLIINKPLSDTLRDVFEELEISHHNTFNEILDYPLYMGGPISPHKIMILHTTNGRNYSSTIKLDEGLAITASMDILEDLANNILPEYFLPVVGYSCWTADQLTDEIKSNDWIVTNKLSKKILFNHENKVKWQNHIEHAGYTLQSLDSLFKNIGNC.

The protein belongs to the UPF0301 (AlgH) family.

This chain is UPF0301 protein Fphi_1754, found in Francisella philomiragia subsp. philomiragia (strain ATCC 25017 / CCUG 19701 / FSC 153 / O#319-036).